The following is a 387-amino-acid chain: Protein salvador homolog 1 (387 aa).

Ser95 and Ser138 each carry phosphoserine. 2 WW domains span residues 201–234 (LPLPPGWSVDWTMRGRKYYIDHNTNTTHWSHPLE) and 236–269 (EGLPPGWERVESSEFGTYYVDHTNKRAQYRHPCA). Position 212 is a phosphothreonine (Thr212). An SARAH domain is found at 323 to 370 (ILKWELFQLADLDTYQGMLKLLFMKELEQIVKLYEAYRQALVTELENR).

Homodimer. Stabilized through interaction with STK3/MST2 or STK4/MST1. Interacts (via SARAH domain) with isoform 1 of NEK2. Interacts with ESR1 only in the presence of STK3/MST2. Interacts with WTIP and AJUBA. Phosphorylated by STK3/MST2 and STK4/MST1. Phosphorylation is not required for SAV1 stability and may increase the number of protein binding sites on the scaffold molecule.

The protein resides in the nucleus. It localises to the cytoplasm. Functionally, regulator of STK3/MST2 and STK4/MST1 in the Hippo signaling pathway which plays a pivotal role in organ size control and tumor suppression by restricting proliferation and promoting apoptosis. The core of this pathway is composed of a kinase cascade wherein STK3/MST2 and STK4/MST1, in complex with its regulatory protein SAV1, phosphorylates and activates LATS1/2 in complex with its regulatory protein MOB1, which in turn phosphorylates and inactivates YAP1 oncoprotein and WWTR1/TAZ. Phosphorylation of YAP1 by LATS1/2 inhibits its translocation into the nucleus to regulate cellular genes important for cell proliferation, cell death, and cell migration. SAV1 is required for STK3/MST2 and STK4/MST1 activation and promotes cell-cycle exit and terminal differentiation in developing epithelial tissues. Plays a role in centrosome disjunction by regulating the localization of NEK2 to centrosomes, and its ability to phosphorylate CROCC and CEP250. In conjunction with STK3/MST2, activates the transcriptional activity of ESR1 through the modulation of its phosphorylation. In Rattus norvegicus (Rat), this protein is Protein salvador homolog 1.